The chain runs to 153 residues: Vasotocin-neurophysin VT 1 (153 aa).

Residues 1 to 19 form the signal peptide; that stretch reads MPQCALLLSLLGLLALSSA. A disulfide bridge links cysteine 20 with cysteine 25. A Glycine amide modification is found at glycine 28. Cystine bridges form between cysteine 41/cysteine 85, cysteine 44/cysteine 58, cysteine 52/cysteine 75, cysteine 59/cysteine 65, cysteine 92/cysteine 105, cysteine 99/cysteine 117, and cysteine 106/cysteine 111.

It belongs to the vasopressin/oxytocin family. Post-translationally, seven disulfide bonds are present in neurophysin.

It localises to the secreted. In terms of biological role, vasotocin is probably an antidiuretic hormone. This Takifugu rubripes (Japanese pufferfish) protein is Vasotocin-neurophysin VT 1.